The chain runs to 283 residues: MSDKEQTSGNTDLENAPAGYYSSHDNDVNGVAEDERPSHDSLGKIYTGGDNNEYIYIGRQKFLKSDLYQAFGGTLNPGLAPAPVHKFANPAPLGLSAFALTTFVLSMFNARAQGITVPNVVVGCAMFYGGLVQLIAGIWEIALENTFGGTALCSYGGFWLSFAAIYIPWFGILEAYEDNESDLNNALGFYLLGWAIFTFGLTVCTMKSTVMFFLLFFLLALTFLLLSIGHFANRLGVTRAGGVLGVVVAFIAWYNAYAGVATKQNSYVLARPFPLPSTERVIF.

The disordered stretch occupies residues 1-41 (MSDKEQTSGNTDLENAPAGYYSSHDNDVNGVAEDERPSHDS). Residues 1-89 (MSDKEQTSGN…APAPVHKFAN (89 aa)) lie on the Cytoplasmic side of the membrane. Residues 90–110 (PAPLGLSAFALTTFVLSMFNA) traverse the membrane as a helical segment. Residues 111–120 (RAQGITVPNV) lie on the Extracellular side of the membrane. A helical transmembrane segment spans residues 121–141 (VVGCAMFYGGLVQLIAGIWEI). The Cytoplasmic segment spans residues 142–151 (ALENTFGGTA). The helical transmembrane segment at 152–172 (LCSYGGFWLSFAAIYIPWFGI) threads the bilayer. Topologically, residues 173–185 (LEAYEDNESDLNN) are extracellular. Residues 186–206 (ALGFYLLGWAIFTFGLTVCTM) traverse the membrane as a helical segment. Topologically, residues 207 to 208 (KS) are cytoplasmic. A helical membrane pass occupies residues 209-229 (TVMFFLLFFLLALTFLLLSIG). Over 230-240 (HFANRLGVTRA) the chain is Extracellular. The helical transmembrane segment at 241-261 (GGVLGVVVAFIAWYNAYAGVA) threads the bilayer. The Cytoplasmic portion of the chain corresponds to 262 to 283 (TKQNSYVLARPFPLPSTERVIF).

It belongs to the acetate uptake transporter (AceTr) (TC 2.A.96) family.

It is found in the cell membrane. The protein resides in the vacuole membrane. In terms of biological role, transporter protein required for ammonia export and acetate uptake and resistance. Necessary for up-regulation and down-regulation of meiotic plaque (MP) component levels in a dependency on external acetate. Has a role in ascus formation. The polypeptide is Accumulation of dyads protein 2 (ADY2) (Saccharomyces cerevisiae (strain ATCC 204508 / S288c) (Baker's yeast)).